A 278-amino-acid chain; its full sequence is HTH-type transcriptional activator RhaS (278 aa).

Residues 174 to 272 (NQLLAWLEDH…DWSPRDIRQG (99 aa)) form the HTH araC/xylS-type domain. 2 consecutive DNA-binding regions (H-T-H motif) follow at residues 191–212 (ESIA…KQQT) and 239–262 (VTDI…RREF).

As to quaternary structure, binds DNA as a dimer.

It localises to the cytoplasm. Functionally, activates expression of the rhaBAD and rhaT operons. This is HTH-type transcriptional activator RhaS from Citrobacter koseri (strain ATCC BAA-895 / CDC 4225-83 / SGSC4696).